A 1123-amino-acid chain; its full sequence is Probable serine/threonine-protein kinase nek3 (1123 aa).

In terms of domain architecture, Protein kinase spans 4 to 264 (YEEIKTIGKG…VNDILELPFI (261 aa)). ATP contacts are provided by residues 10–18 (IGKGSFGRA) and Lys-33. Catalysis depends on Asp-130, which acts as the Proton acceptor. Low complexity-rich tracts occupy residues 283 to 307 (NNDSLNISNNSSGSNNSASNNISSS) and 327 to 415 (NNNN…TSLK). Disordered stretches follow at residues 283 to 310 (NNDSLNISNNSSGSNNSASNNISSSTEV), 325 to 415 (NINN…TSLK), 440 to 802 (SKTP…TNSQ), 866 to 887 (SASTASTASTTNTTLTSGTNTM), 908 to 937 (SVKLSSKSSSPIKTSSSSSSSSSSSSSITD), and 990 to 1020 (SLNNSLTSSSSSIITNQNNQNNQNNQNNQNN). Residues 440 to 459 (SKTPISGTKNPTTSKITPSI) are compositionally biased toward polar residues. 4 stretches are compositionally biased toward low complexity: residues 478–529 (SKPT…SSSV), 557–576 (SNLSSQISSSSSSSSSSNSQ), 588–617 (SPTSTSTKSPTNPSPTLSSSSSLPKSSLKS), and 642–653 (NGNSNVNSTVLN). Residues 654-665 (RSVSSLSIQHKP) are compositionally biased toward polar residues. Low complexity-rich tracts occupy residues 666–696 (TNSGSSSISSSSSGNNSNSNTTTNNNTTSTT), 712–738 (STPTSISTSNKSTTTTPTSSRSNTPST), and 752–802 (SSNG…TNSQ). Residues 908 to 935 (SVKLSSKSSSPIKTSSSSSSSSSSSSSI) show a composition bias toward low complexity.

The protein belongs to the protein kinase superfamily. NEK Ser/Thr protein kinase family. NIMA subfamily.

The catalysed reaction is L-seryl-[protein] + ATP = O-phospho-L-seryl-[protein] + ADP + H(+). The enzyme catalyses L-threonyl-[protein] + ATP = O-phospho-L-threonyl-[protein] + ADP + H(+). This Dictyostelium discoideum (Social amoeba) protein is Probable serine/threonine-protein kinase nek3 (nek3).